The chain runs to 145 residues: Putative pre-16S rRNA nuclease (145 aa).

Belongs to the YqgF nuclease family.

It localises to the cytoplasm. Its function is as follows. Could be a nuclease involved in processing of the 5'-end of pre-16S rRNA. The sequence is that of Putative pre-16S rRNA nuclease from Pseudomonas fluorescens (strain Pf0-1).